Here is a 167-residue protein sequence, read N- to C-terminus: Putative pre-16S rRNA nuclease (167 aa).

It belongs to the YqgF nuclease family.

Its subcellular location is the cytoplasm. Functionally, could be a nuclease involved in processing of the 5'-end of pre-16S rRNA. In Streptomyces coelicolor (strain ATCC BAA-471 / A3(2) / M145), this protein is Putative pre-16S rRNA nuclease.